A 67-amino-acid chain; its full sequence is Cell division protein ZapB (67 aa).

Residues 3–59 adopt a coiled-coil conformation; sequence LELLSKLETKIQTALETIELLKMELEEEKQKSIGLAEQNQQLSQDLNSWNEKVTGLV.

Belongs to the ZapB family. Homodimer. The ends of the coiled-coil dimer bind to each other, forming polymers. Interacts with FtsZ.

The protein resides in the cytoplasm. Non-essential, abundant cell division factor that is required for proper Z-ring formation. It is recruited early to the divisome by direct interaction with FtsZ, stimulating Z-ring assembly and thereby promoting cell division earlier in the cell cycle. Its recruitment to the Z-ring requires functional FtsA or ZipA. This is Cell division protein ZapB from Shewanella woodyi (strain ATCC 51908 / MS32).